The chain runs to 562 residues: NAD-dependent malic enzyme (562 aa).

Catalysis depends on Y101, which acts as the Proton donor. R154 is a binding site for NAD(+). The active-site Proton acceptor is K172. A divalent metal cation contacts are provided by E243, D244, and D267. Positions 267 and 415 each coordinate NAD(+).

This sequence belongs to the malic enzymes family. As to quaternary structure, homotetramer. The cofactor is Mg(2+). Mn(2+) is required as a cofactor.

The catalysed reaction is (S)-malate + NAD(+) = pyruvate + CO2 + NADH. The enzyme catalyses oxaloacetate + H(+) = pyruvate + CO2. This is NAD-dependent malic enzyme from Shewanella sp. (strain ANA-3).